The following is a 309-amino-acid chain: Calponin-2 (309 aa).

At Ser2 the chain carries N-acetylserine. Lys8 and Lys25 each carry N6-acetyllysine. The Calponin-homology (CH) domain occupies 28 to 132; the sequence is PQKEAELRTW…SLLALAGKAK (105 aa). Ser138 carries the phosphoserine modification. 3 Calponin-like repeats span residues 166 to 191, 206 to 231, and 245 to 269; these read IGLQMGTNKCASQSGMTAYGTRRHLY, ISLQMGTNKCASQVGMTAPGTRRHIY, and MSLQMGYTQGANQSGQVFGLGRQIY. The disordered stretch occupies residues 283-309; that stretch reads APSGTGDCPDPGEVPEYPPYYQEEAGY.

Belongs to the calponin family. Heart and smooth muscle.

In terms of biological role, thin filament-associated protein that is implicated in the regulation and modulation of smooth muscle contraction. It is capable of binding to actin, calmodulin and tropomyosin. The interaction of calponin with actin inhibits the actomyosin Mg-ATPase activity. The sequence is that of Calponin-2 (CNN2) from Homo sapiens (Human).